The chain runs to 115 residues: NAD(P)H-quinone oxidoreductase subunit M (115 aa).

It belongs to the complex I NdhM subunit family. As to quaternary structure, NDH-1 can be composed of about 15 different subunits; different subcomplexes with different compositions have been identified which probably have different functions.

The protein localises to the cellular thylakoid membrane. It catalyses the reaction a plastoquinone + NADH + (n+1) H(+)(in) = a plastoquinol + NAD(+) + n H(+)(out). The enzyme catalyses a plastoquinone + NADPH + (n+1) H(+)(in) = a plastoquinol + NADP(+) + n H(+)(out). In terms of biological role, NDH-1 shuttles electrons from an unknown electron donor, via FMN and iron-sulfur (Fe-S) centers, to quinones in the respiratory and/or the photosynthetic chain. The immediate electron acceptor for the enzyme in this species is believed to be plastoquinone. Couples the redox reaction to proton translocation, and thus conserves the redox energy in a proton gradient. Cyanobacterial NDH-1 also plays a role in inorganic carbon-concentration. This is NAD(P)H-quinone oxidoreductase subunit M from Synechococcus sp. (strain CC9902).